The following is a 433-amino-acid chain: Casein kinase 1-like protein 5 (433 aa).

A Protein kinase domain is found at 9-278 (FRLGRKIGSG…LKRLFRNLFI (270 aa)). Residues 15-23 (IGSGSFGEI) and lysine 38 contribute to the ATP site. Aspartate 128 (proton acceptor) is an active-site residue. The tract at residues 297–433 (QSQSGNPQPR…DDVEPQSKAL (137 aa)) is disordered. The span at 342–359 (LKQKDKNGNDSAIAKDKL) shows a compositional bias: basic and acidic residues. Low complexity predominate over residues 362-375 (GSLNLGRSEGSSSR). Serine 390 carries the phosphoserine modification. Residues 407–423 (INNNAGDETAATPQSNG) show a composition bias toward polar residues.

The protein belongs to the protein kinase superfamily. CK1 Ser/Thr protein kinase family. Casein kinase I subfamily. Monomer. Autophosphorylated.

The protein resides in the cytoplasm. It catalyses the reaction L-seryl-[protein] + ATP = O-phospho-L-seryl-[protein] + ADP + H(+). The enzyme catalyses L-threonyl-[protein] + ATP = O-phospho-L-threonyl-[protein] + ADP + H(+). In terms of biological role, casein kinases are operationally defined by their preferential utilization of acidic proteins such as caseins as substrates. It can phosphorylate a large number of proteins. The protein is Casein kinase 1-like protein 5 of Arabidopsis thaliana (Mouse-ear cress).